A 248-amino-acid chain; its full sequence is NH(3)-dependent NAD(+) synthetase (248 aa).

31–38 (GLSGGVDS) provides a ligand contact to ATP. Position 37 (Asp37) interacts with Mg(2+). Position 114 (Arg114) interacts with deamido-NAD(+). Thr134 provides a ligand contact to ATP. Glu139 provides a ligand contact to Mg(2+). Deamido-NAD(+) is bound by residues Lys147 and Asp154. ATP-binding residues include Lys163 and Thr185. 232–233 (HK) serves as a coordination point for deamido-NAD(+).

This sequence belongs to the NAD synthetase family. In terms of assembly, homodimer.

It catalyses the reaction deamido-NAD(+) + NH4(+) + ATP = AMP + diphosphate + NAD(+) + H(+). It functions in the pathway cofactor biosynthesis; NAD(+) biosynthesis; NAD(+) from deamido-NAD(+) (ammonia route): step 1/1. Functionally, catalyzes the ATP-dependent amidation of deamido-NAD to form NAD. Uses ammonia as a nitrogen source. The chain is NH(3)-dependent NAD(+) synthetase from Mycoplasma pneumoniae (strain ATCC 29342 / M129 / Subtype 1) (Mycoplasmoides pneumoniae).